Reading from the N-terminus, the 99-residue chain is Cell cycle protein GpsB (99 aa).

A coiled-coil region spans residues 34–71 (LDMIIKDYETFHQEIEELQQENLQLKKQLEEASKKQPV).

Belongs to the GpsB family. In terms of assembly, forms polymers through the coiled coil domains. Interacts with PBP1, MreC and EzrA.

It is found in the cytoplasm. Divisome component that associates with the complex late in its assembly, after the Z-ring is formed, and is dependent on DivIC and PBP2B for its recruitment to the divisome. Together with EzrA, is a key component of the system that regulates PBP1 localization during cell cycle progression. Its main role could be the removal of PBP1 from the cell pole after pole maturation is completed. Also contributes to the recruitment of PBP1 to the division complex. Not essential for septum formation. The sequence is that of Cell cycle protein GpsB from Bacillus velezensis (strain DSM 23117 / BGSC 10A6 / LMG 26770 / FZB42) (Bacillus amyloliquefaciens subsp. plantarum).